Consider the following 215-residue polypeptide: Adenylate kinase (215 aa).

10–15 (GAGKGT) serves as a coordination point for ATP. Residues 30-60 (STGDMLRAAIIKAGTEMGKQAKSVIDAGQLV) are NMP. Residues Thr31, Arg36, 58-60 (QLV), 86-89 (GFPR), and Gln93 each bind AMP. Residues 123 to 160 (GRRAHLPSGRTYHVTFNPSKVEGQDDVTGEPLVIREDD) are LID. Residues Arg124 and 133–134 (TY) contribute to the ATP site. Positions 157 and 168 each coordinate AMP. Lys201 contacts ATP.

The protein belongs to the adenylate kinase family. As to quaternary structure, monomer.

It localises to the cytoplasm. It catalyses the reaction AMP + ATP = 2 ADP. The protein operates within purine metabolism; AMP biosynthesis via salvage pathway; AMP from ADP: step 1/1. Catalyzes the reversible transfer of the terminal phosphate group between ATP and AMP. Plays an important role in cellular energy homeostasis and in adenine nucleotide metabolism. In Aliivibrio salmonicida (strain LFI1238) (Vibrio salmonicida (strain LFI1238)), this protein is Adenylate kinase.